Reading from the N-terminus, the 338-residue chain is Ketol-acid reductoisomerase (NADP(+)) (338 aa).

Positions 1-181 (MKVFYDKDCD…GGGRAGIIET (181 aa)) constitute a KARI N-terminal Rossmann domain. Residues 24-27 (YGSQ), R47, and S52 each bind NADP(+). Residue H107 is part of the active site. G133 contributes to the NADP(+) binding site. A KARI C-terminal knotted domain is found at 182 to 327 (NFREETETDL…AKLRAMMPWI (146 aa)). 4 residues coordinate Mg(2+): D190, E194, E226, and E230. S251 is a substrate binding site.

This sequence belongs to the ketol-acid reductoisomerase family. Requires Mg(2+) as cofactor.

It carries out the reaction (2R)-2,3-dihydroxy-3-methylbutanoate + NADP(+) = (2S)-2-acetolactate + NADPH + H(+). The enzyme catalyses (2R,3R)-2,3-dihydroxy-3-methylpentanoate + NADP(+) = (S)-2-ethyl-2-hydroxy-3-oxobutanoate + NADPH + H(+). The protein operates within amino-acid biosynthesis; L-isoleucine biosynthesis; L-isoleucine from 2-oxobutanoate: step 2/4. It participates in amino-acid biosynthesis; L-valine biosynthesis; L-valine from pyruvate: step 2/4. Involved in the biosynthesis of branched-chain amino acids (BCAA). Catalyzes an alkyl-migration followed by a ketol-acid reduction of (S)-2-acetolactate (S2AL) to yield (R)-2,3-dihydroxy-isovalerate. In the isomerase reaction, S2AL is rearranged via a Mg-dependent methyl migration to produce 3-hydroxy-3-methyl-2-ketobutyrate (HMKB). In the reductase reaction, this 2-ketoacid undergoes a metal-dependent reduction by NADPH to yield (R)-2,3-dihydroxy-isovalerate. The sequence is that of Ketol-acid reductoisomerase (NADP(+)) from Herminiimonas arsenicoxydans.